Here is a 101-residue protein sequence, read N- to C-terminus: Small ribosomal subunit protein uS14 (101 aa).

The protein belongs to the universal ribosomal protein uS14 family. In terms of assembly, part of the 30S ribosomal subunit. Contacts proteins S3 and S10.

Its function is as follows. Binds 16S rRNA, required for the assembly of 30S particles and may also be responsible for determining the conformation of the 16S rRNA at the A site. This is Small ribosomal subunit protein uS14 from Stutzerimonas stutzeri (strain A1501) (Pseudomonas stutzeri).